Here is a 135-residue protein sequence, read N- to C-terminus: MADITVVNDTGELYNVINQKKSEGYLESELTIISKSKLHLNDLHDSEISLISTSGTFSDKMTKLLTGEDGEHAVLSRYNLAPDELEKYKQLILDDKMLVVGVRDHSSHQEVLENNSAYEEVDITHFAEASKGPKA.

Belongs to the UPF0355 family.

The sequence is that of UPF0355 protein MRSA252 from Staphylococcus aureus (strain MRSA252).